Here is a 348-residue protein sequence, read N- to C-terminus: Phosphate acyltransferase (348 aa).

The protein belongs to the PlsX family. Homodimer. Probably interacts with PlsY.

It is found in the cytoplasm. The catalysed reaction is a fatty acyl-[ACP] + phosphate = an acyl phosphate + holo-[ACP]. Its pathway is lipid metabolism; phospholipid metabolism. Functionally, catalyzes the reversible formation of acyl-phosphate (acyl-PO(4)) from acyl-[acyl-carrier-protein] (acyl-ACP). This enzyme utilizes acyl-ACP as fatty acyl donor, but not acyl-CoA. This is Phosphate acyltransferase from Rhizobium etli (strain ATCC 51251 / DSM 11541 / JCM 21823 / NBRC 15573 / CFN 42).